A 277-amino-acid chain; its full sequence is Inorganic pyrophosphatase (277 aa).

Arginine 80 is a binding site for diphosphate. Mg(2+)-binding residues include aspartate 117, aspartate 122, and aspartate 154.

This sequence belongs to the PPase family. Mg(2+) serves as cofactor.

The protein resides in the cytoplasm. The catalysed reaction is diphosphate + H2O = 2 phosphate + H(+). In terms of biological role, involved in osmoadaptation. This is Inorganic pyrophosphatase (IPP1) from Encephalitozoon cuniculi (strain GB-M1) (Microsporidian parasite).